A 146-amino-acid polypeptide reads, in one-letter code: VHWSAEEKQLITGLWGKVNVAECGAEALARLLIVYPWTQRFFTSFGNLSSASAVLGNPNVRAHGKKVLTSFGEAVKNLDNIKNTFAQLSELHCDKLHVDPENFRLLGDILIIVLAGHFGKDFTPDCQAAWQKLVRAVAHALARKYH.

Residues 2–146 (HWSAEEKQLI…VAHALARKYH (145 aa)) enclose the Globin domain. Heme b contacts are provided by histidine 63 and histidine 92.

It belongs to the globin family. As to quaternary structure, heterotetramer of two alpha chains and two beta chains. Red blood cells.

Functionally, involved in oxygen transport from the lung to the various peripheral tissues. This is Hemoglobin subunit beta (HBB) from Psittacula krameri (Rose-ringed parakeet).